The chain runs to 445 residues: tRNA modification GTPase MnmE (445 aa).

Residues R21, E78, and K117 each coordinate (6S)-5-formyl-5,6,7,8-tetrahydrofolate. The TrmE-type G domain occupies 213–370 (GFRIALVGAP…LKETLSERVV (158 aa)). Residues 223 to 228 (NAGKST), 242 to 248 (TATPGTT), and 267 to 270 (DTAG) contribute to the GTP site. Mg(2+) is bound by residues S227 and T248. K445 is a (6S)-5-formyl-5,6,7,8-tetrahydrofolate binding site.

It belongs to the TRAFAC class TrmE-Era-EngA-EngB-Septin-like GTPase superfamily. TrmE GTPase family. As to quaternary structure, homodimer. Heterotetramer of two MnmE and two MnmG subunits. Requires K(+) as cofactor.

It is found in the cytoplasm. Exhibits a very high intrinsic GTPase hydrolysis rate. Involved in the addition of a carboxymethylaminomethyl (cmnm) group at the wobble position (U34) of certain tRNAs, forming tRNA-cmnm(5)s(2)U34. The chain is tRNA modification GTPase MnmE from Phenylobacterium zucineum (strain HLK1).